The primary structure comprises 122 residues: Large ribosomal subunit protein uL14 (122 aa).

It belongs to the universal ribosomal protein uL14 family. Part of the 50S ribosomal subunit. Forms a cluster with proteins L3 and L19. In the 70S ribosome, L14 and L19 interact and together make contacts with the 16S rRNA in bridges B5 and B8.

In terms of biological role, binds to 23S rRNA. Forms part of two intersubunit bridges in the 70S ribosome. The chain is Large ribosomal subunit protein uL14 from Mycolicibacterium vanbaalenii (strain DSM 7251 / JCM 13017 / BCRC 16820 / KCTC 9966 / NRRL B-24157 / PYR-1) (Mycobacterium vanbaalenii).